Reading from the N-terminus, the 498-residue chain is Putative antiporter subunit mnhD2 (498 aa).

14 helical membrane-spanning segments follow: residues 2-22 (LSNL…ILVF), 32-52 (YLYL…LIYV), 78-98 (LSLI…AYGF), 108-128 (YHLP…FLTS), 130-150 (LFNL…LITL), 161-181 (IIYV…IGLL), 209-229 (ISLI…FMWL), 240-260 (LAAL…IRFF), 271-291 (IHPL…IGVI), 308-328 (IGFI…GAIF), 330-350 (LVND…LVYI), 369-389 (FGVA…FSGF), 406-426 (IGLA…FRIF), and 451-471 (ILSI…VVLN).

This sequence belongs to the CPA3 antiporters (TC 2.A.63) subunit D family. As to quaternary structure, may form a heterooligomeric complex that consists of seven subunits: mnhA2, mnhB2, mnhC2, mnhD2, mnhE2, mnhF2 and mnhG2.

The protein localises to the cell membrane. In Staphylococcus aureus (strain Mu3 / ATCC 700698), this protein is Putative antiporter subunit mnhD2 (mnhD2).